The chain runs to 399 residues: Elongation factor Tu (399 aa).

A tr-type G domain is found at 10 to 209; it reads KPHVNVGTIG…EVDKYIPTPQ (200 aa). The G1 stretch occupies residues 19–26; that stretch reads GHVDHGKT. 19–26 contacts GTP; it reads GHVDHGKT. Residue T26 participates in Mg(2+) binding. A G2 region spans residues 60-64; the sequence is GITIA. The interval 81–84 is G3; it reads DCPG. Residues 81–85 and 136–139 each bind GTP; these read DCPGH and NKQD. Positions 136–139 are G4; it reads NKQD. Positions 174–176 are G5; sequence SAL.

Belongs to the TRAFAC class translation factor GTPase superfamily. Classic translation factor GTPase family. EF-Tu/EF-1A subfamily. Monomer.

It localises to the cytoplasm. The catalysed reaction is GTP + H2O = GDP + phosphate + H(+). Functionally, GTP hydrolase that promotes the GTP-dependent binding of aminoacyl-tRNA to the A-site of ribosomes during protein biosynthesis. This Helicobacter hepaticus (strain ATCC 51449 / 3B1) protein is Elongation factor Tu.